The chain runs to 238 residues: Probable transcriptional regulatory protein Sde_1551 (238 aa).

It belongs to the TACO1 family.

Its subcellular location is the cytoplasm. This is Probable transcriptional regulatory protein Sde_1551 from Saccharophagus degradans (strain 2-40 / ATCC 43961 / DSM 17024).